We begin with the raw amino-acid sequence, 2223 residues long: Protein CHROMATIN REMODELING 4 (2223 aa).

The interval 39–69 (FDSPEYTSSSKPSKQRLKTDSTPERNSSKRK) is disordered. Basic and acidic residues predominate over residues 55–69 (LKTDSTPERNSSKRK). The PHD-type zinc-finger motif lies at 75 to 122 (YFECVICDLGGDLLCCDSCPRTYHTACLNPPLKRIPNGKWICPKCSPN). Composition is skewed to basic and acidic residues over residues 173 to 187 (EKGK…KSTG), 207 to 223 (SADD…DDLG), 248 to 285 (ESKL…ETGK), and 294 to 305 (ELNDGESLERCK). Disordered stretches follow at residues 173–235 (EKGK…LPSD), 248–381 (ESKL…CLED), and 441–474 (AEDR…GTEG). Residues 306–315 (TDKKRAKKSL) are compositionally biased toward basic residues. Basic and acidic residues predominate over residues 353 to 368 (ETPEKVKKLPKEERRA). Over residues 372–381 (TNKSSSCLED) the composition is skewed to polar residues. Basic and acidic residues predominate over residues 441-466 (AEDRIDSSSETGKSSRDSRLRDKDMD). 2 Chromo domains span residues 531 to 587 (EEIE…YKAK) and 601 to 663 (KQPQ…ERNS). In terms of domain architecture, Helicase ATP-binding spans 701–878 (RRCWHKSKNV…YNLLNFLQPS (178 aa)). An ATP-binding site is contributed by 714–721 (DEMGLGKT). Residues 829–832 (DEGH) carry the DEAH box motif. Residues 902-909 (LKKLVAPH) carry the Nuclear localization signal motif. Residues 1008-1167 (LLHSMLKVLH…GSQKEFEDIL (160 aa)) enclose the Helicase C-terminal domain. Disordered stretches follow at residues 1268 to 1300 (EETA…DDVV), 1341 to 1380 (EAYA…LKEK), 1394 to 1463 (RRNS…ECLP), 1483 to 1511 (SESS…FNLP), 1760 to 1779 (LSSL…SSLF), and 2006 to 2223 (IPPF…LSDD). Basic and acidic residues predominate over residues 1363 to 1380 (EPELKKEYTPAGRALKEK). A coiled-coil region spans residues 1375 to 1402 (RALKEKFTKLRERQKNLIARRNSVEESL). Residues 1403-1414 (PSGNVDQVTEVA) show a composition bias toward polar residues. Residues 2009-2019 (FVIPEPPPPAP) are compositionally biased toward pro residues. A compositionally biased stretch (basic residues) spans 2025 to 2035 (SLRKKRKRKLH). 3 stretches are compositionally biased toward polar residues: residues 2039–2061 (QKTT…GNPQ), 2075–2096 (GETS…TEPL), and 2128–2148 (TGTT…TINQ). The segment covering 2157-2171 (DEKVESERTPLHSDE) has biased composition (basic and acidic residues). Residues 2189 to 2215 (IEAESQNTNAEEEAEAQEEDEESMKMV) adopt a coiled-coil conformation. Residues 2198-2210 (AEEEAEAQEEDEE) are compositionally biased toward acidic residues.

It belongs to the SNF2/RAD54 helicase family.

The protein localises to the nucleus. Chromatin-remodeling protein that binds DNA through histones and regulates gene transcription. May specifically recognize and bind trimethylated 'Lys-27' (H3K27me3) and non-methylated 'Lys-4' of histone H3. Probable chromatin remodeling factor. The sequence is that of Protein CHROMATIN REMODELING 4 from Arabidopsis thaliana (Mouse-ear cress).